A 405-amino-acid chain; its full sequence is L-carnitine CoA-transferase (405 aa).

Residues Lys-97 and Arg-104 each coordinate CoA. Asp-169 acts as the Nucleophile in catalysis.

It belongs to the CoA-transferase III family. CaiB subfamily. Homodimer.

The protein localises to the cytoplasm. It catalyses the reaction crotonobetainyl-CoA + (R)-carnitine = crotonobetaine + (R)-carnitinyl-CoA. The catalysed reaction is 4-(trimethylamino)butanoyl-CoA + (R)-carnitine = (R)-carnitinyl-CoA + 4-(trimethylamino)butanoate. It participates in amine and polyamine metabolism; carnitine metabolism. Functionally, catalyzes the reversible transfer of the CoA moiety from gamma-butyrobetainyl-CoA to L-carnitine to generate L-carnitinyl-CoA and gamma-butyrobetaine. Is also able to catalyze the reversible transfer of the CoA moiety from gamma-butyrobetainyl-CoA or L-carnitinyl-CoA to crotonobetaine to generate crotonobetainyl-CoA. The protein is L-carnitine CoA-transferase of Escherichia coli O17:K52:H18 (strain UMN026 / ExPEC).